The following is a 225-amino-acid chain: Uridylate kinase (225 aa).

9–10 (GS) is an ATP binding site. Residue Gly46 participates in UMP binding. ATP is bound by residues Gly47 and Arg51. UMP is bound by residues Asp67 and 115-121 (THPAHTT). ATP is bound by residues Thr141, Asn142, Tyr147, and Asp150.

This sequence belongs to the UMP kinase family. Homohexamer.

It is found in the cytoplasm. The enzyme catalyses UMP + ATP = UDP + ADP. The protein operates within pyrimidine metabolism; CTP biosynthesis via de novo pathway; UDP from UMP (UMPK route): step 1/1. Its activity is regulated as follows. Inhibited by UTP. Its function is as follows. Catalyzes the reversible phosphorylation of UMP to UDP. The chain is Uridylate kinase from Methanococcus maripaludis (strain DSM 14266 / JCM 13030 / NBRC 101832 / S2 / LL).